Here is a 247-residue protein sequence, read N- to C-terminus: uncharacterized protein (247 aa).

It belongs to the AIM2 family.

The protein resides in the cytoplasm. It localises to the nucleus. This is an uncharacterized protein from Schizosaccharomyces pombe (strain 972 / ATCC 24843) (Fission yeast).